The primary structure comprises 348 residues: Anthranilate phosphoribosyltransferase (348 aa).

5-phospho-alpha-D-ribose 1-diphosphate contacts are provided by residues G81, 84-85, 91-94, 109-117, and S121; these read GD, NVST, and KHGNRAVSG. G81 serves as a coordination point for anthranilate. Mg(2+) is bound at residue S93. An anthranilate-binding site is contributed by N112. Position 167 (R167) interacts with anthranilate. Residues D226 and E227 each contribute to the Mg(2+) site.

This sequence belongs to the anthranilate phosphoribosyltransferase family. As to quaternary structure, homodimer. It depends on Mg(2+) as a cofactor.

It catalyses the reaction N-(5-phospho-beta-D-ribosyl)anthranilate + diphosphate = 5-phospho-alpha-D-ribose 1-diphosphate + anthranilate. Its pathway is amino-acid biosynthesis; L-tryptophan biosynthesis; L-tryptophan from chorismate: step 2/5. Catalyzes the transfer of the phosphoribosyl group of 5-phosphorylribose-1-pyrophosphate (PRPP) to anthranilate to yield N-(5'-phosphoribosyl)-anthranilate (PRA). This is Anthranilate phosphoribosyltransferase from Azotobacter vinelandii (strain DJ / ATCC BAA-1303).